The following is a 429-amino-acid chain: Adenylosuccinate synthetase (429 aa).

Residues 13–19 (GDEGKGK) and 41–43 (GHT) each bind GTP. D14 acts as the Proton acceptor in catalysis. Residues D14 and G41 each coordinate Mg(2+). IMP is bound by residues 14–17 (DEGK), 39–42 (NAGH), T130, R144, Q225, T240, and R304. The Proton donor role is filled by H42. 300–306 (ATTGRAR) contacts substrate. Residues R306, 332–334 (KLD), and 413–415 (STG) each bind GTP.

Belongs to the adenylosuccinate synthetase family. As to quaternary structure, homodimer. Requires Mg(2+) as cofactor.

The protein localises to the cytoplasm. The enzyme catalyses IMP + L-aspartate + GTP = N(6)-(1,2-dicarboxyethyl)-AMP + GDP + phosphate + 2 H(+). Its pathway is purine metabolism; AMP biosynthesis via de novo pathway; AMP from IMP: step 1/2. Functionally, plays an important role in the de novo pathway of purine nucleotide biosynthesis. Catalyzes the first committed step in the biosynthesis of AMP from IMP. The protein is Adenylosuccinate synthetase of Pseudomonas fluorescens (strain Pf0-1).